The primary structure comprises 169 residues: Fumarase E (169 aa).

This sequence belongs to the MtlR/FumE family. As to quaternary structure, homodimer.

The catalysed reaction is (S)-malate = fumarate + H2O. Functionally, in vitro catalyzes the addition of water to fumarate, forming malate. Cannot catalyze the reverse reaction. Cannot use the cis-isomer maleate as substrate. This chain is Fumarase E, found in Shigella flexneri.